Reading from the N-terminus, the 733-residue chain is Ribosomal protein S6 kinase 2 alpha (733 aa).

Residues 18-38 (EDPENGHGSPEEGGRHTSKDE) are disordered. The 260-residue stretch at 62 to 321 (FVLLKVLGQG…AEEIKRQPFF (260 aa)) folds into the Protein kinase 1 domain. Residues 68-76 (LGQGSFGKV) and lysine 94 each bind ATP. The active-site Proton acceptor is the aspartate 187. Serine 221 carries the phosphoserine modification. Residues 322–391 (STIDWNKLFR…VAPALVEEDA (70 aa)) enclose the AGC-kinase C-terminal domain. Threonine 359 carries the post-translational modification Phosphothreonine. Serine 363 carries the post-translational modification Phosphoserine. Serine 380 carries the phosphoserine; by autocatalysis modification. Residues 416–673 (YTVRETIGVG…AKQVLQHEWI (258 aa)) enclose the Protein kinase 2 domain. Residues 422-430 (IGVGSYSVC) and lysine 445 contribute to the ATP site. Aspartate 533 (proton acceptor) is an active-site residue. Threonine 571 carries the phosphothreonine modification. Residue serine 730 is modified to Phosphoserine.

It belongs to the protein kinase superfamily. AGC Ser/Thr protein kinase family. S6 kinase subfamily. It depends on Mg(2+) as a cofactor. In terms of processing, autophosphorylated on Ser-380, as part of the activation process.

The enzyme catalyses L-seryl-[protein] + ATP = O-phospho-L-seryl-[protein] + ADP + H(+). It carries out the reaction L-threonyl-[protein] + ATP = O-phospho-L-threonyl-[protein] + ADP + H(+). With respect to regulation, activated by multiple phosphorylations on threonine and serine residues. In terms of biological role, serine/threonine kinase that may play a role in mediating the growth-factor and stress induced activation of transcription. The sequence is that of Ribosomal protein S6 kinase 2 alpha (rps6ka) from Xenopus laevis (African clawed frog).